The chain runs to 261 residues: Leucine-rich repeat-containing protein 18 (261 aa).

LRR repeat units follow at residues 28–49 (GKKRLDLSKMGITTFPKCILRL), 51–72 (DMDELDLSRNLIRKIPDSISKF), 74–95 (NLRWLDLHSNYIDKLPESIGQM), 97–118 (SLLYLNVSNNRLTSNGLPVELK), 122–144 (NIRAVNLGLNHLDSVPTTLGALK), 145–167 (ELHEVGLHDNLLNNIPVSISKLP), and 168–189 (KLKKLNIKRNPFPKPGESEIFI).

It localises to the cytoplasm. Its function is as follows. May be involved in the regulation of spermatogenesis and sperm maturation. In Homo sapiens (Human), this protein is Leucine-rich repeat-containing protein 18 (LRRC18).